The following is a 259-amino-acid chain: Truncated Ankyrin repeat protein OPG003 (259 aa).

It belongs to the orthopoxvirus OPG003 family.

The chain is Truncated Ankyrin repeat protein OPG003 (OPG003) from Vaccinia virus (strain Copenhagen) (VACV).